The primary structure comprises 207 residues: LPS-assembly lipoprotein LptE (207 aa).

An N-terminal signal peptide occupies residues 1–19; sequence MRHRILMLLLGLAVLVTAG. The N-palmitoyl cysteine moiety is linked to residue Cys20. Cys20 carries S-diacylglycerol cysteine lipidation.

This sequence belongs to the LptE lipoprotein family. As to quaternary structure, component of the lipopolysaccharide transport and assembly complex. Interacts with LptD.

Its subcellular location is the cell outer membrane. Together with LptD, is involved in the assembly of lipopolysaccharide (LPS) at the surface of the outer membrane. Required for the proper assembly of LptD. Binds LPS and may serve as the LPS recognition site at the outer membrane. In Yersinia enterocolitica serotype O:8 / biotype 1B (strain NCTC 13174 / 8081), this protein is LPS-assembly lipoprotein LptE.